The chain runs to 498 residues: Beta-1,3-glucosyltransferase (498 aa).

Residues 1-6 (MRPPAC) are Cytoplasmic-facing. The helical; Signal-anchor for type II membrane protein transmembrane segment at 7–27 (WWLLAPPALLALLTCSLAFGL) threads the bilayer. Residues 28-498 (ASEDTKKEVK…ETQKGFREEL (471 aa)) are Lumenal-facing. N-linked (GlcNAc...) asparagine glycosylation occurs at Asn-336. The Prevents secretion from ER motif lies at 495 to 498 (REEL).

Belongs to the glycosyltransferase 31 family. Widely expressed, with highest levels in testis and uterus.

The protein localises to the endoplasmic reticulum membrane. It participates in protein modification; protein glycosylation. O-glucosyltransferase that transfers glucose toward fucose with a beta-1,3 linkage. Specifically glucosylates O-linked fucosylglycan on TSP type-1 domains of proteins, thereby contributing to elongation of O-fucosylglycan. This chain is Beta-1,3-glucosyltransferase, found in Homo sapiens (Human).